The chain runs to 73 residues: Translation initiation factor IF-1 (73 aa).

Residues 1 to 73 (MSKKKDVIEM…TRGRITYRYK (73 aa)) form the S1-like domain.

This sequence belongs to the IF-1 family. Component of the 30S ribosomal translation pre-initiation complex which assembles on the 30S ribosome in the order IF-2 and IF-3, IF-1 and N-formylmethionyl-tRNA(fMet); mRNA recruitment can occur at any time during PIC assembly.

It localises to the cytoplasm. Functionally, one of the essential components for the initiation of protein synthesis. Stabilizes the binding of IF-2 and IF-3 on the 30S subunit to which N-formylmethionyl-tRNA(fMet) subsequently binds. Helps modulate mRNA selection, yielding the 30S pre-initiation complex (PIC). Upon addition of the 50S ribosomal subunit IF-1, IF-2 and IF-3 are released leaving the mature 70S translation initiation complex. The chain is Translation initiation factor IF-1 from Roseiflexus castenholzii (strain DSM 13941 / HLO8).